The following is a 315-amino-acid chain: MSQSLRIIFAGTPDFAARHLDALLSSEHQVVGVFTQPDRPAGRGKKLMPSPVKVLAEAHNLPVFQPSSLRPQDNQRLVADLGADIMVVVAYGLILPKAVLEMPRLGCINVHGSLLPRWRGAAPIQRSLWAGDSETGVTIMQMDVGLDTGDMLYKLSCPITAEDTSGSLYDKLAELGPQGLLATLAQLANGTARPEVQDESLVCHAEKLSKEEARIDWSLSAAQLERCIRAFNPWPMSWLEIDGQPVKVWRASVIAEAAHAEPGTIVAATKQGIQVATGDGILSLESLQPAGKKAMSAQDLLNSRREWFIPGTRLA.

Residue 113-116 (SLLP) coordinates (6S)-5,6,7,8-tetrahydrofolate.

It belongs to the Fmt family.

It carries out the reaction L-methionyl-tRNA(fMet) + (6R)-10-formyltetrahydrofolate = N-formyl-L-methionyl-tRNA(fMet) + (6S)-5,6,7,8-tetrahydrofolate + H(+). Attaches a formyl group to the free amino group of methionyl-tRNA(fMet). The formyl group appears to play a dual role in the initiator identity of N-formylmethionyl-tRNA by promoting its recognition by IF2 and preventing the misappropriation of this tRNA by the elongation apparatus. The sequence is that of Methionyl-tRNA formyltransferase from Klebsiella pneumoniae subsp. pneumoniae (strain ATCC 700721 / MGH 78578).